A 131-amino-acid chain; its full sequence is Interleukin-13 (131 aa).

The N-terminal stretch at 1–18 (MALWVTAVLALACLGGLA) is a signal peptide. N-linked (GlcNAc...) asparagine glycosylation is found at N42, N52, and N75. 2 cysteine pairs are disulfide-bonded: C51/C79 and C67/C93.

The protein belongs to the IL-4/IL-13 family. Interacts with IL13RA2.

It localises to the secreted. Cytokine that plays important roles in allergic inflammation and immune response to parasite infection. Synergizes with IL2 in regulating interferon-gamma synthesis. Stimulates B-cell proliferation, and activation of eosinophils, basophils, and mast cells. Plays an important role in controlling IL33 activity by modulating the production of transmembrane and soluble forms of interleukin-1 receptor-like 1/IL1RL1. Displays the capacity to antagonize Th1-driven proinflammatory immune response and downregulates synthesis of many proinflammatory cytokines including IL1, IL6, IL10, IL12 and TNF-alpha through a mechanism that partially involves suppression of NF-kappa-B. Also functions on nonhematopoietic cells, including endothelial cells where it induces vascular cell adhesion protein 1/VCAM1, which is important in the recruitment of eosinophils. Exerts its biological effects through its receptors which comprises the IL4R chain and the IL13RA1 chain, to activate JAK1 and TYK2, leading to the activation of STAT6. Aside from IL13RA1, another receptor IL13RA2 acts as a high affinity decoy for IL13 and mediates internalization and depletion of extracellular IL13. This chain is Interleukin-13 (Il13), found in Mus musculus (Mouse).